A 176-amino-acid chain; its full sequence is Cytochrome c-552 (176 aa).

Residues 12 to 32 (GALIGSLLFLLLMSWAASGIF) traverse the membrane as a helical; Signal-anchor segment. Residues cysteine 90, cysteine 93, histidine 94, methionine 126, and methionine 154 each contribute to the heme c site.

In terms of processing, binds 1 heme c group covalently per subunit.

It localises to the cell membrane. Mediates the electron transport between the cytochrome bc1 complex and cytochrome-c oxidase. The polypeptide is Cytochrome c-552 (cycM) (Paracoccus denitrificans).